Here is a 677-residue protein sequence, read N- to C-terminus: Secretogranin-1 (677 aa).

A signal peptide spans 1-20; sequence MQPTLLLSLLGAVGLAAVNS. A disulfide bridge links C36 with C57. Composition is skewed to basic and acidic residues over residues 64–100 and 118–136; these read SRKD…ESSS and ADTE…RADE. Residues 64-463 are disordered; that stretch reads SRKDVKDKET…DKARRHPQGA (400 aa). T79 carries the post-translational modification Phosphothreonine. S93, S99, and S100 each carry phosphoserine. S93 carries an O-linked (Xyl...) (chondroitin sulfate) serine glycan. The interval 116-120 is O-glycosylated at one site; that stretch reads TKADT. Phosphoserine; by FAM20C is present on S130. S149 carries the phosphoserine modification. Basic and acidic residues-rich tracts occupy residues 150-162, 172-190, and 200-236; these read EEVK…KSQR, NYQK…HLEE, and NERK…EKSS. Phosphoserine is present on S183. S225 bears the Phosphoserine; by FAM20C mark. S239 is a glycosylation site (O-linked (Xyl...) (chondroitin sulfate) serine). S259 and S263 each carry phosphoserine. Positions 262–272 are enriched in acidic residues; the sequence is ESEEGEEDATS. Residues 277 to 287 show a composition bias toward basic residues; that stretch reads RRTRPRHHHGR. Phosphoserine is present on residues S293, S294, S311, and S335. Y341 is modified (sulfotyrosine). Residues 359–372 are compositionally biased toward basic and acidic residues; that stretch reads WERYRGRGSEEYRA. A phosphoserine; by FAM20C mark is found at S367, S377, and S380. Composition is skewed to basic and acidic residues over residues 384–415 and 433–455; these read EDKR…EPGK and DTRE…QMDK. A Phosphotyrosine modification is found at Y401. At S405 the chain carries Phosphoserine. Y474 is subject to Sulfotyrosine. Residues 475 to 512 are disordered; the sequence is GEEGAPGKWQQQGDLQDTKENREEARFQDKQYSSHHTA. Basic and acidic residues predominate over residues 490 to 503; sequence QDTKENREEARFQD. Phosphoserine is present on residues S533 and S534. At Y566 the chain carries Sulfotyrosine. At S617 the chain carries Phosphoserine. The disordered stretch occupies residues 622-653; sequence DFYDSEEPVSTHQEAENEKDRADQTVLTEDEK. A Sulfotyrosine modification is found at Y624. S626 and S631 each carry phosphoserine. Basic and acidic residues predominate over residues 634-653; that stretch reads QEAENEKDRADQTVLTEDEK.

The protein belongs to the chromogranin/secretogranin protein family. Interacts with ITPR1 in the secretory granules. In terms of processing, extensively processed by limited proteolysis at conserved basic residues. Alternative processing are seen in different tissues. O-glycosylated. Detected in cerebrospinal fluid and urine (at protein level). Expressed in the adrenal medulla, and in pheochromocytoma. Not expressed in liver.

The protein localises to the secreted. Functionally, secretogranin-1 is a neuroendocrine secretory granule protein, which may be the precursor for other biologically active peptides. The sequence is that of Secretogranin-1 (CHGB) from Homo sapiens (Human).